Reading from the N-terminus, the 243-residue chain is Thiocyanate hydrolase subunit gamma (243 aa).

Co(3+) contacts are provided by cysteine 128, cysteine 131, serine 132, and cysteine 133. Cysteine 131 carries the cysteine sulfinic acid (-SO2H) modification. Cysteine 133 is subject to Cysteine sulfenic acid (-SOH).

Belongs to the nitrile hydratase subunit alpha family. In terms of assembly, heterododecamer consisting of 4 alpha, 4 beta, and 4 gamma subunits. Requires Co(3+) as cofactor.

It catalyses the reaction thiocyanate + H2O + 2 H(+) = carbonyl sulfide + NH4(+). It participates in organosulfur degradation; thiocyanate degradation. Involved in the degradation of thiocyanate. This is Thiocyanate hydrolase subunit gamma (scnC) from Thiobacillus thioparus.